A 342-amino-acid polypeptide reads, in one-letter code: Methionine import ATP-binding protein MetN (342 aa).

The ABC transporter domain maps to 2–241 (ITLEQVTKIY…PQQPITKRFV (240 aa)). 38–45 (GYSGAGKS) contacts ATP.

The protein belongs to the ABC transporter superfamily. Methionine importer (TC 3.A.1.24) family. As to quaternary structure, the complex is composed of two ATP-binding proteins (MetN), two transmembrane proteins (MetI) and a solute-binding protein (MetQ).

It localises to the cell membrane. It catalyses the reaction L-methionine(out) + ATP + H2O = L-methionine(in) + ADP + phosphate + H(+). It carries out the reaction D-methionine(out) + ATP + H2O = D-methionine(in) + ADP + phosphate + H(+). Functionally, part of the ABC transporter complex MetNIQ involved in methionine import. Responsible for energy coupling to the transport system. This chain is Methionine import ATP-binding protein MetN, found in Geobacillus kaustophilus (strain HTA426).